The chain runs to 184 residues: Rhox homeobox family member 1 (184 aa).

Residues 26 to 104 are disordered; the sequence is QLGAASSAEG…GPQPENMQPR (79 aa). Residues 88–99 are compositionally biased toward low complexity; it reads PAQAAMEGPQPE. The segment at residues 103 to 162 is a DNA-binding region (homeobox); the sequence is PRTRRTKFTLLQVEELESVFRHTQYPDVPTRRELAENLGVTEDKVRVWFKNKRARCRRHQ. Residues 155 to 164 carry the Nuclear localization signal motif; it reads RARCRRHQRE.

The protein belongs to the paired-like homeobox family. PEPP subfamily. As to quaternary structure, does not interact with itself. Ovary, testis and epididymis. Also detected in the prostate and the mammary gland. Expressed in many tumor cell lines derived from acute lymphocytic leukemia, prostate, endometrial adenocarcinoma, melanoma, bladder carcinoma, colon carcinoma, erythroleukemia and breast carcinoma. Not expressed in placenta. In testis, mainly expressed in germ cells, but also detected in somatic cells such as Sertoli cells, Leydig cells and peritubular cells.

The protein resides in the nucleus. Transcription factor maybe involved in reproductive processes. Modulates expression of target genes encoding proteins involved in processes relevant to spermatogenesis. The protein is Rhox homeobox family member 1 of Homo sapiens (Human).